Consider the following 235-residue polypeptide: MDKIRTVSDTKRDFYNHHTRPINSIYRRFIEELLVEMHLLCVNIDFRYDPIYALGVVASFQQFMQGYRPEEDKNSIFSALCQAVGGDGEKYRHEAQTLLNQVKGMSVSDLIAMGNSARTGEPGEGMLYNTLQAIAKNPQFKYSRLFAIGLYTMVMEIDADLLKEQDKRNETFSQLCNGLNLSSDKLQKDLDLYRSNVDKMGQLLAVIEDALEAERKKREKAKQEVATTPEDSPAN.

The stretch at 179–228 (LNLSSDKLQKDLDLYRSNVDKMGQLLAVIEDALEAERKKREKAKQEVATT) forms a coiled coil.

The protein belongs to the THF1 family.

Its function is as follows. May be involved in photosynthetic membrane biogenesis. This is Protein Thf1 from Rippkaea orientalis (strain PCC 8801 / RF-1) (Cyanothece sp. (strain PCC 8801)).